Here is a 471-residue protein sequence, read N- to C-terminus: MSHQSDLIETDIDAYLAQHEQKELLRFLTCGSVDDGKSTLIGRLLHDSKMIYEDQLEAVRNDNSKHGTTGDKVDLALLVDGLQAEREQGITIDVAYRYFSTAKRKFIIADTPGHEQYTRNMATGASTCDMAIILIDARHGVMTQTRRHSFIASLLGIKHLVIAINKMDLVDYSQETFESIKQAYGEVAKTLGQENLYFVPMSALDGDNVVNKSENMPWYTGESLMEILESVQITGAKNLKDFRYPVQYVNRPHLNFRGFCGTVASGEVKVGDEIRVLPSGKTSKVKEIVTYDGNLDKAFIDQAVTITLEDEIDISRGDMLVHAASDVQMSNRFKAHLVWMSETNMAPGKEYLFKFATKVTPGSVAAIDYRVDVNTFEHSSIEKMELNDIAVVELALDQQVVAESYQVNRGTGAFIVIDRLTNITVAAGMVIDVLEESSEAKSDFSAFEVELNALVRKHFPHWDAKDISKLL.

Positions 22 to 237 (KELLRFLTCG…LESVQITGAK (216 aa)) constitute a tr-type G domain. The tract at residues 31–38 (GSVDDGKS) is G1. GTP is bound at residue 31-38 (GSVDDGKS). The interval 89–93 (GITID) is G2. Residues 110–113 (DTPG) are G3. GTP contacts are provided by residues 110 to 114 (DTPGH) and 165 to 168 (NKMD). The tract at residues 165-168 (NKMD) is G4. The tract at residues 202–204 (SAL) is G5.

This sequence belongs to the TRAFAC class translation factor GTPase superfamily. Classic translation factor GTPase family. CysN/NodQ subfamily. Heterodimer composed of CysD, the smaller subunit, and CysN.

The catalysed reaction is sulfate + ATP + H(+) = adenosine 5'-phosphosulfate + diphosphate. The protein operates within sulfur metabolism; hydrogen sulfide biosynthesis; sulfite from sulfate: step 1/3. Its function is as follows. With CysD forms the ATP sulfurylase (ATPS) that catalyzes the adenylation of sulfate producing adenosine 5'-phosphosulfate (APS) and diphosphate, the first enzymatic step in sulfur assimilation pathway. APS synthesis involves the formation of a high-energy phosphoric-sulfuric acid anhydride bond driven by GTP hydrolysis by CysN coupled to ATP hydrolysis by CysD. The chain is Sulfate adenylyltransferase subunit 1 from Saccharophagus degradans (strain 2-40 / ATCC 43961 / DSM 17024).